Here is a 439-residue protein sequence, read N- to C-terminus: GTPase Der (439 aa).

2 EngA-type G domains span residues 4-168 and 177-352; these read PIVA…KDDE and INIA…DNYT. Residues 10-17, 57-61, 120-123, 183-190, 230-234, and 295-298 each bind GTP; these read GRPNVGKS, DTGGI, NKID, GKPNVGKS, DTAGL, and NKWD. The KH-like domain occupies 353 to 437; sequence KRVKTGVLND…GIKLEFRERK (85 aa).

The protein belongs to the TRAFAC class TrmE-Era-EngA-EngB-Septin-like GTPase superfamily. EngA (Der) GTPase family. In terms of assembly, associates with the 50S ribosomal subunit.

GTPase that plays an essential role in the late steps of ribosome biogenesis. In Clostridium botulinum (strain Kyoto / Type A2), this protein is GTPase Der.